The following is a 356-amino-acid chain: GDP-mannose:di-myo-inositol-1,3'-phosphate beta-1,2-mannosyltransferase (356 aa).

Belongs to the MDIP synthase family. It depends on Mg(2+) as a cofactor.

It catalyses the reaction bis(myo-inositol) 1,3'-phosphate + GDP-alpha-D-mannose = 2-O-(beta-D-mannosyl)-bis(myo-inositol) 1,3'-phosphate + GDP + H(+). The enzyme catalyses 2-O-(beta-D-mannosyl)-bis(myo-inositol) 1,3'-phosphate + GDP-alpha-D-mannose = 2-O-(beta-D-mannosyl-(1-&gt;2)-beta-D-mannosyl)-bis(myo-inositol) 1,3'-phosphate + GDP + H(+). The catalysed reaction is bis(myo-inositol) 1,3'-phosphate + 2 GDP-alpha-D-mannose = 2-O-(beta-D-mannosyl-(1-&gt;2)-beta-D-mannosyl)-bis(myo-inositol) 1,3'-phosphate + 2 GDP + 2 H(+). Catalyzes the transfer of the mannosyl group from GDP-mannose to di-myo-inositol-1,3'-phosphate (DIP), producing mannosyl-di-myo-inositol phosphate (MDIP). Can also use MDIP as an acceptor of a second mannose residue, yielding di-mannosyl-di-myo-inositol phosphate (MMDIP). Minor amounts of the tri-mannosylated form are also formed. This chain is GDP-mannose:di-myo-inositol-1,3'-phosphate beta-1,2-mannosyltransferase, found in Thermotoga maritima (strain ATCC 43589 / DSM 3109 / JCM 10099 / NBRC 100826 / MSB8).